A 377-amino-acid chain; its full sequence is Adaptive-response sensory kinase SasA (377 aa).

The 220-residue stretch at 154 to 373 folds into the Histidine kinase domain; the sequence is MLVHDLRSPL…SFHFTLPVYR (220 aa). The residue at position 157 (His-157) is a Phosphohistidine; by autocatalysis.

In terms of assembly, homooligomerizes. Interacts with KaiC. Participates in the KaiABC clock complex, whose core is composed of a KaiC homohexamer, 6 KaiB and up to 6 KaiA dimers. SasA and KaiB(fs) compete to bind to KaiC.

It catalyses the reaction ATP + protein L-histidine = ADP + protein N-phospho-L-histidine.. Functionally, member of the two-component regulatory system SasA/RpaA involved in genome-wide circadian gene expression. One of several clock output pathways. Participates in the Kai clock protein complex, the main circadian regulator in cyanobacteria, via its interaction with KaiC. KaiC enhances the autophosphorylation activity of SasA, which then transfers its phosphate group to RpaA to activate it. In addition to its output function, recruits fold-shifted KaiB (KaiB(fs)) to KaiC to cooperatively form the KaiB(6):KaiC(6) complex (independent of SasA kinase activity). Required for robustness of the circadian rhythm of gene expression and is involved in clock output, also required for adaptation to light/dark cycles. This chain is Adaptive-response sensory kinase SasA, found in Synechococcus sp. (strain JA-3-3Ab) (Cyanobacteria bacterium Yellowstone A-Prime).